The sequence spans 889 residues: DNA mismatch repair protein MutS (889 aa).

A compositionally biased stretch (low complexity) spans 1-17; the sequence is MPKTNSSAASTNANPSS. The disordered stretch occupies residues 1 to 20; the sequence is MPKTNSSAASTNANPSSLQQ. 640-647 is an ATP binding site; the sequence is GPNMGGKS.

Belongs to the DNA mismatch repair MutS family.

This protein is involved in the repair of mismatches in DNA. It is possible that it carries out the mismatch recognition step. This protein has a weak ATPase activity. The chain is DNA mismatch repair protein MutS from Pseudoalteromonas atlantica (strain T6c / ATCC BAA-1087).